A 142-amino-acid polypeptide reads, in one-letter code: Large ribosomal subunit protein uL13 (142 aa).

The protein belongs to the universal ribosomal protein uL13 family. In terms of assembly, part of the 50S ribosomal subunit.

In terms of biological role, this protein is one of the early assembly proteins of the 50S ribosomal subunit, although it is not seen to bind rRNA by itself. It is important during the early stages of 50S assembly. The protein is Large ribosomal subunit protein uL13 of Mannheimia succiniciproducens (strain KCTC 0769BP / MBEL55E).